Reading from the N-terminus, the 467-residue chain is MIRVRFAPSPTGHLHVGGLRTALFNWYFAKKNNGKFILRIEDTDMERSKKEYEDAILEEMKWVGLDYDEGVDKPGEYGPYRQSERLDIYKHYIDQLLNEEKAYFSVTKNDEIIFEGNNLLDKYKKNNDYSVVVKFKVNNDQKISFLDDVRGTIQFDTSNINDFVILRSNGIPVYNFTVVIDDYLMKISHVIRGEDHISNTPKQILIYNALSFELPKFAHLPLILGEDKSPLSKRHGEVSITYFREEGYLPKAILNYLSLLGWNANEQIFDYTEKYQEFDLKKVSRNPSIFDYTKLLWTNEVHLRNDPIEEVHKSFTEWAKYTTVKIDNEDSFVKKIIEASRAKVQTLKQLYEFSKNFFVEEFEYEEEFIEKYMKKPWFKQVIEATIRKLSEIDEYNLANVENTLKEIADLNITSRKNVFQTIRGSLLGRLVTPGLYESIIILGKNESIKRLKRALEFSNTLDINPRR.

Residues 8 to 18 (PSPTGHLHVGG) carry the 'HIGH' region motif. The 'KMSKS' region signature appears at 230–234 (PLSKR). Residue Lys-233 participates in ATP binding.

It belongs to the class-I aminoacyl-tRNA synthetase family. Glutamate--tRNA ligase type 1 subfamily. As to quaternary structure, monomer.

Its subcellular location is the cytoplasm. It carries out the reaction tRNA(Glu) + L-glutamate + ATP = L-glutamyl-tRNA(Glu) + AMP + diphosphate. Catalyzes the attachment of glutamate to tRNA(Glu) in a two-step reaction: glutamate is first activated by ATP to form Glu-AMP and then transferred to the acceptor end of tRNA(Glu). The sequence is that of Glutamate--tRNA ligase 1 from Petrotoga mobilis (strain DSM 10674 / SJ95).